Reading from the N-terminus, the 627-residue chain is Zinc finger MYM-type protein 5 (627 aa).

The segment at 1 to 23 is disordered; that stretch reads MEAHLADMESSGGPTSSLAGTSR. The span at 12-23 shows a compositional bias: polar residues; the sequence is GGPTSSLAGTSR. Lysine 59 is covalently cross-linked (Glycyl lysine isopeptide (Lys-Gly) (interchain with G-Cter in SUMO2)). The disordered stretch occupies residues 91–123; that stretch reads DDEGDTDTNGGEEKNPTDFIEWGPNGNKSSTKN. Residues lysine 137 and lysine 195 each participate in a glycyl lysine isopeptide (Lys-Gly) (interchain with G-Cter in SUMO2) cross-link. The MYM-type 1 zinc finger occupies 234–268; that stretch reads HLFCSTTCLSSFSHKRTRKTRNVMCKKDSPVRTTT. An MYM-type 2; degenerate zinc finger spans residues 280-319; the sequence is QGFYNASLSPYENCQSLRKEVFTKSRCIICNKLGEVRHEI. 2 consecutive MYM-type zinc fingers follow at residues 326–354 and 370–396; these read HKLCSNNCFNEYRLTNGLIMNCCEQCSKY and KRFCCQNCADEYKEIMEAKSKLLLLQN. Residues 405 to 429 are disordered; that stretch reads ENEKRLRESSGTLSGNTGDIPEKKE. Glycyl lysine isopeptide (Lys-Gly) (interchain with G-Cter in SUMO2) cross-links involve residues lysine 408, lysine 427, and lysine 517.

In terms of assembly, interacts (via N-terminal 120 amino acid region) with ETV5 (via C-terminal).

The protein localises to the nucleus. In terms of biological role, functions as a transcriptional regulator. The sequence is that of Zinc finger MYM-type protein 5 (Zmym5) from Mus musculus (Mouse).